The following is a 112-amino-acid chain: Urocortin-2 (112 aa).

Positions 1–22 (MTRCALLLLMVLMLGRVLVVPV) are cleaved as a signal peptide. Residues 23–70 (TPIPTFQLRPQNSPQTTPRPAASESPSAAPTWPWAAQSHCSPTRHPGS) constitute a propeptide that is removed on maturation. Positions 27 to 66 (TFQLRPQNSPQTTPRPAASESPSAAPTWPWAAQSHCSPTR) are disordered. Residues 38-58 (TTPRPAASESPSAAPTWPWAA) show a composition bias toward low complexity.

The protein belongs to the sauvagine/corticotropin-releasing factor/urotensin I family. As to quaternary structure, binds with high affinity to CRF receptors 2-alpha and 2-beta. In terms of processing, glycosylated.

The protein localises to the secreted. Its function is as follows. Suppresses food intake, delays gastric emptying and decreases heat-induced edema. Might represent an endogenous ligand for maintaining homeostasis after stress. This chain is Urocortin-2 (UCN2), found in Homo sapiens (Human).